The sequence spans 285 residues: Bifunctional protein FolD (285 aa).

NADP(+)-binding positions include 166–168 and isoleucine 232; that span reads GAS.

Belongs to the tetrahydrofolate dehydrogenase/cyclohydrolase family. Homodimer.

The enzyme catalyses (6R)-5,10-methylene-5,6,7,8-tetrahydrofolate + NADP(+) = (6R)-5,10-methenyltetrahydrofolate + NADPH. The catalysed reaction is (6R)-5,10-methenyltetrahydrofolate + H2O = (6R)-10-formyltetrahydrofolate + H(+). It functions in the pathway one-carbon metabolism; tetrahydrofolate interconversion. In terms of biological role, catalyzes the oxidation of 5,10-methylenetetrahydrofolate to 5,10-methenyltetrahydrofolate and then the hydrolysis of 5,10-methenyltetrahydrofolate to 10-formyltetrahydrofolate. The polypeptide is Bifunctional protein FolD (Vibrio vulnificus (strain CMCP6)).